The primary structure comprises 231 residues: Urease subunit gamma/beta (231 aa).

The interval 1–101 is urease gamma; the sequence is MLLTPTELER…LVTVHQPIRP (101 aa). Residues 102-231 form a urease beta region; sequence GKLPLAVMPT…RARAQHFKGA (130 aa).

In the N-terminal section; belongs to the urease gamma subunit family. This sequence in the C-terminal section; belongs to the urease beta subunit family. As to quaternary structure, heterohexamer of 3 UreC (alpha) and 3 UreAB (gamma/beta) subunits.

It localises to the cytoplasm. It catalyses the reaction urea + 2 H2O + H(+) = hydrogencarbonate + 2 NH4(+). The protein operates within nitrogen metabolism; urea degradation; CO(2) and NH(3) from urea (urease route): step 1/1. The polypeptide is Urease subunit gamma/beta (Pseudomonas syringae pv. tomato (strain ATCC BAA-871 / DC3000)).